Here is an 87-residue protein sequence, read N- to C-terminus: Small ribosomal subunit protein uS15 (87 aa).

This sequence belongs to the universal ribosomal protein uS15 family. In terms of assembly, part of the 30S ribosomal subunit. Forms a bridge to the 50S subunit in the 70S ribosome, contacting the 23S rRNA.

In terms of biological role, one of the primary rRNA binding proteins, it binds directly to 16S rRNA where it helps nucleate assembly of the platform of the 30S subunit by binding and bridging several RNA helices of the 16S rRNA. Functionally, forms an intersubunit bridge (bridge B4) with the 23S rRNA of the 50S subunit in the ribosome. This chain is Small ribosomal subunit protein uS15, found in Ruminiclostridium cellulolyticum (strain ATCC 35319 / DSM 5812 / JCM 6584 / H10) (Clostridium cellulolyticum).